Reading from the N-terminus, the 229-residue chain is Transcriptional activator protein IrlR (229 aa).

The Response regulatory domain occupies 2 to 115; it reads RILIVEDEPK…ELVARVRSIL (114 aa). Aspartate 51 carries the post-translational modification 4-aspartylphosphate. Positions 123 to 221 form a DNA-binding region, ompR/PhoB-type; that stretch reads STVLRIADLE…VRGMGYVLEV (99 aa).

Phosphorylated by IrlS.

Functionally, member of the two-component regulatory system IrlR/IrlS. May be involved in invasion of eukaryotic cells and heavy-metal resistance. The protein is Transcriptional activator protein IrlR (irlR) of Burkholderia pseudomallei (strain 1026b).